The sequence spans 327 residues: Delta-aminolevulinic acid dehydratase (327 aa).

Zn(2+) contacts are provided by cysteine 119, cysteine 121, and cysteine 129. The Schiff-base intermediate with substrate role is filled by lysine 198. 5-aminolevulinate contacts are provided by arginine 208 and arginine 220. Glutamate 236 contacts Mg(2+). Lysine 251 (schiff-base intermediate with substrate) is an active-site residue. Serine 277 and tyrosine 316 together coordinate 5-aminolevulinate.

This sequence belongs to the ALAD family. In terms of assembly, homooctamer. It depends on Zn(2+) as a cofactor.

It carries out the reaction 2 5-aminolevulinate = porphobilinogen + 2 H2O + H(+). The protein operates within porphyrin-containing compound metabolism; protoporphyrin-IX biosynthesis; coproporphyrinogen-III from 5-aminolevulinate: step 1/4. Its function is as follows. Catalyzes an early step in the biosynthesis of tetrapyrroles. Binds two molecules of 5-aminolevulinate per subunit, each at a distinct site, and catalyzes their condensation to form porphobilinogen. This chain is Delta-aminolevulinic acid dehydratase (hemB), found in Synechocystis sp. (strain ATCC 27184 / PCC 6803 / Kazusa).